The following is a 479-amino-acid chain: 3-phytase B (479 aa).

The signal sequence occupies residues 1-19; it reads MPRTSLLTLACALATGASA. Cystine bridges form between Cys-71–Cys-387, Cys-128–Cys-472, Cys-216–Cys-441, Cys-225–Cys-298, and Cys-413–Cys-421. The active-site Nucleophile is His-82. Asn-191 carries an N-linked (GlcNAc...) asparagine glycan. Asn-315 carries an N-linked (GlcNAc...) asparagine glycan. The Proton donor role is filled by Asp-338. Asn-458 carries an N-linked (GlcNAc...) asparagine glycan.

Belongs to the histidine acid phosphatase family. In terms of assembly, homodimer.

It carries out the reaction 1D-myo-inositol hexakisphosphate + H2O = 1D-myo-inositol 1,2,4,5,6-pentakisphosphate + phosphate. In terms of biological role, catalyzes the hydrolysis of inorganic orthophosphate from phytate. This chain is 3-phytase B (phyB), found in Aspergillus awamori (Black koji mold).